The chain runs to 637 residues: Type II restriction enzyme and methyltransferase RM.BcgI (637 aa).

In the C-terminal section; belongs to the N(4)/N(6)-methyltransferase family. As to quaternary structure, heterotrimer of two A and one B subunit. Both subunits are necessary for DNA-binding, which is sequence non-specific. It depends on Mg(2+) as a cofactor.

The enzyme catalyses Endonucleolytic cleavage of DNA to give specific double-stranded fragments with terminal 5'-phosphates.. It catalyses the reaction a 2'-deoxyadenosine in DNA + S-adenosyl-L-methionine = an N(6)-methyl-2'-deoxyadenosine in DNA + S-adenosyl-L-homocysteine + H(+). DNA restriction requires S-adenosyl-L-methionine and Mg(2+), and is inhibited by S-adenosyl-homocysteine. SAM may be a cofactor for DNA restriction. Functionally, a B, G, H and S subtype restriction enzyme that recognizes the double-stranded sequence 5'-CGAN(6)TGC-3' and cleaves bilaterally and symmetrically 10 base pairs upstream and 12 base pairs downstream of the sequence to release a 34-base pair fragment. Methylation of the recognition sequence occurs on the adenine in either one or both strands; seems to methylate restricted DNA. This subunit has no methylation or DNA restriction activity on its own. The sequence is that of Type II restriction enzyme and methyltransferase RM.BcgI from Heyndrickxia coagulans (Weizmannia coagulans).